The sequence spans 82 residues: Defensin-like protein 156 (82 aa).

An N-terminal signal peptide occupies residues 1–27 (MAKISCSYFLVLMLVFSVFSLVEKTKG). 4 disulfides stabilise this stretch: Cys-31/Cys-77, Cys-41/Cys-60, Cys-46/Cys-71, and Cys-50/Cys-73.

Belongs to the DEFL family. In terms of tissue distribution, expressed in flower buds, but not in stems, roots or rosette leaves.

It localises to the secreted. This Arabidopsis thaliana (Mouse-ear cress) protein is Defensin-like protein 156 (LCR21).